The following is a 448-amino-acid chain: MGRDLRDNETWWYNPSIVVHPHWREFDQVPDAVYYSLGIFIGICGIIGCGGNGIVIYLFTKTKSLQTPANMFIINLAFSDFTFSLVNGFPLMTISCFLKKWIFGFAACKVYGFIGGIFGFMSIMTMAMISIDRYNVIGRPMAASKKMSHRRAFIMIIFVWLWSVLWAIGPIFGWGAYTLEGVLCNCSFDYISRDSTTRSNILCMFILGFFGPILIIFFCYFNIVMSVSNHEKEMAAMAKRLNAKELRKAQAGANAEMRLAKISIVIVSQFLLSWSPYAVVALLAQFGPLEWVTPYAAQLPVMFAKASAIHNPMIYSVSHPKFREAISQTFPWVLTCCQFDDKETEDDKDAETEIPAGESSDAAPSADAAQMKEMMAMMQKMQQQQAAYPPQGYAPPPQGYPPQGYPPQGYPPQGYPPQGYPPPPQGAPPQGAPPAAPPQGVDNQAYQA.

Over 2-33 (GRDLRDNETWWYNPSIVVHPHWREFDQVPDAV) the chain is Extracellular. Residue Asn-8 is glycosylated (N-linked (GlcNAc...) asparagine). A helical transmembrane segment spans residues 34–58 (YYSLGIFIGICGIIGCGGNGIVIYL). Residues 59–70 (FTKTKSLQTPAN) are Cytoplasmic-facing. Residues 71–97 (MFIINLAFSDFTFSLVNGFPLMTISCF) form a helical membrane-spanning segment. The Extracellular segment spans residues 98–109 (LKKWIFGFAACK). Cys-108 and Cys-186 are joined by a disulfide. A helical membrane pass occupies residues 110-131 (VYGFIGGIFGFMSIMTMAMISI). Residues 132-151 (DRYNVIGRPMAASKKMSHRR) lie on the Cytoplasmic side of the membrane. Residues 152-172 (AFIMIIFVWLWSVLWAIGPIF) form a helical membrane-spanning segment. The Extracellular portion of the chain corresponds to 173–199 (GWGAYTLEGVLCNCSFDYISRDSTTRS). Residues 200-224 (NILCMFILGFFGPILIIFFCYFNIV) traverse the membrane as a helical segment. Residues 225 to 261 (MSVSNHEKEMAAMAKRLNAKELRKAQAGANAEMRLAK) lie on the Cytoplasmic side of the membrane. A helical transmembrane segment spans residues 262–283 (ISIVIVSQFLLSWSPYAVVALL). Residues 284–293 (AQFGPLEWVT) lie on the Extracellular side of the membrane. A helical membrane pass occupies residues 294 to 315 (PYAAQLPVMFAKASAIHNPMIY). An N6-(retinylidene)lysine modification is found at Lys-305. The Cytoplasmic segment spans residues 316-448 (SVSHPKFREA…QGVDNQAYQA (133 aa)). Residues Cys-336 and Cys-337 are each lipidated (S-palmitoyl cysteine). The span at 343–352 (ETEDDKDAET) shows a compositional bias: acidic residues. Positions 343-448 (ETEDDKDAET…QGVDNQAYQA (106 aa)) are disordered. Low complexity predominate over residues 359–391 (SSDAAPSADAAQMKEMMAMMQKMQQQQAAYPPQ). Residues 392-437 (GYAPPPQGYPPQGYPPQGYPPQGYPPQGYPPPPQGAPPQGAPPAAP) are compositionally biased toward pro residues.

The protein belongs to the G-protein coupled receptor 1 family. Opsin subfamily. In terms of processing, contains one covalently linked retinal chromophore. Upon light absorption, the covalently bound 11-cis-retinal is converted to all-trans-retinal. After hydrolysis of the Schiff base and release of the covalently bound all-trans-retinal, active rhodopsin is regenerated by binding of a fresh molecule of 11-cis-retinal. In terms of tissue distribution, retina, rhabdomere membrane of photoreceptor cells (at protein level).

The protein localises to the cell projection. It is found in the rhabdomere membrane. Its function is as follows. Photoreceptor required for image-forming vision at low light intensity. Light-induced isomerization of 11-cis to all-trans retinal triggers a conformational change that activates signaling via G-proteins. Signaling mediates the activation of phospholipase C. Subsequent receptor phosphorylation mediates displacement of the bound G-protein alpha subunit by arrestin and terminates signaling. The polypeptide is Rhodopsin (RHO) (Todarodes pacificus (Japanese flying squid)).